A 502-amino-acid chain; its full sequence is MVAQRYRTRFAPSPTGYLHVGGLRTALYNYLFVKKMKGDFVLRIEDTDRSRRVEGAQQNLLKTLEWAGIVPDESPELGGDFGPYIQSERLEIYKKYCDELLEGKYAYYCFATSEELEENRQLQLKQGLQPKYNRKWLPEEMGGSMPSSEIRKKMEQNAPYVIRMKVPDYVSVWFEDLIRGPVEFDSSTIDDQVLMKSDGFPTYHFASVIDDHLMEFTHIIRGEEWLPSMPKHLLLYEFFGWEPPKFAHLPLLLNPDRSKLSKRQGDVAVEDYIRKGYSAEAIVNFVAMLGWNEGEGTEQEVYSLEQLVERFSLERVGKAGAIFNVDKLNWLEKQYIKSRSADRIIAVIKPLLMAELEKRPTAMHESVITSDLYLEQVIELMRERVGFEHEFVTFSPYFFFDPETYEEEGVRKRWTAETNTLLREFVTVLASLDAFTAEAIETELKAFVAPKGLKAAALIHPLRILCSGVSFGPSLYHMLEVLGKDAVIRRISRGIETVVCLS.

Residues 12–22 (PSPTGYLHVGG) carry the 'HIGH' region motif. The 'KMSKS' region motif lies at 259 to 263 (KLSKR). Lysine 262 contacts ATP.

This sequence belongs to the class-I aminoacyl-tRNA synthetase family. Glutamate--tRNA ligase type 1 subfamily. Monomer.

The protein localises to the cytoplasm. It carries out the reaction tRNA(Glu) + L-glutamate + ATP = L-glutamyl-tRNA(Glu) + AMP + diphosphate. Catalyzes the attachment of glutamate to tRNA(Glu) in a two-step reaction: glutamate is first activated by ATP to form Glu-AMP and then transferred to the acceptor end of tRNA(Glu). The chain is Glutamate--tRNA ligase from Chlorobium phaeobacteroides (strain DSM 266 / SMG 266 / 2430).